A 654-amino-acid polypeptide reads, in one-letter code: Macrolide export ATP-binding/permease protein MacB (654 aa).

Residues isoleucine 6–proline 244 enclose the ABC transporter domain. Glycine 42 to serine 49 lines the ATP pocket. A run of 4 helical transmembrane segments spans residues phenylalanine 278–glycine 298, leucine 527–methionine 547, valine 584–phenylalanine 604, and serine 619–alanine 639.

This sequence belongs to the ABC transporter superfamily. Macrolide exporter (TC 3.A.1.122) family. As to quaternary structure, homodimer.

The protein localises to the cell inner membrane. In terms of biological role, non-canonical ABC transporter that contains transmembrane domains (TMD), which form a pore in the inner membrane, and an ATP-binding domain (NBD), which is responsible for energy generation. Confers resistance against macrolides. This chain is Macrolide export ATP-binding/permease protein MacB, found in Rhodopseudomonas palustris (strain HaA2).